Here is a 240-residue protein sequence, read N- to C-terminus: Small ribosomal subunit protein uS3 (240 aa).

The KH type-2 domain maps to 39 to 108 (LRKFLKKKLY…ELILNIKEER (70 aa)). The segment covering 213–224 (MNSDDTATPERK) has biased composition (basic and acidic residues). A disordered region spans residues 213-240 (MNSDDTATPERKAPRRRKGRRNVNAKKN). Residues 225-240 (APRRRKGRRNVNAKKN) show a composition bias toward basic residues.

It belongs to the universal ribosomal protein uS3 family. In terms of assembly, part of the 30S ribosomal subunit. Forms a tight complex with proteins S10 and S14.

Functionally, binds the lower part of the 30S subunit head. Binds mRNA in the 70S ribosome, positioning it for translation. In Nautilia profundicola (strain ATCC BAA-1463 / DSM 18972 / AmH), this protein is Small ribosomal subunit protein uS3.